The chain runs to 77 residues: UPF0213 protein VNG_2274C (77 aa).

The GIY-YIG domain maps to 1–75 (MHHVYVIECS…KQLSRAQKEA (75 aa)).

Belongs to the UPF0213 family.

The chain is UPF0213 protein VNG_2274C from Halobacterium salinarum (strain ATCC 700922 / JCM 11081 / NRC-1) (Halobacterium halobium).